A 416-amino-acid chain; its full sequence is MESYIQNLFAERIGGKSFGKEDVIYKFEKIKRAKQAAKLKYPDMELIDMGVGEPDEMADESVVEVLCEEAKKHVNRGYSDNGVQALKDEIPIYLEKIFGVKDLDPVNEVVHSIGSKPALAYITSVFINPGDVTLMTVPGYPVTATHTKWYGGSVETLPLLEKNNFLPELDAISKEVRENAKILYLNYPNNPTGAQATKKFYKEAVDFAFENDLIVIQDAAYAALTYGDKPLSFLSVKDAKEVGVEIHSFSKAYNMTGWRLAFVAGNELIVRGFAAVKDNYDSGQFIPIQKAGIHCLRHPEITEKTRAKYERRLSKMVKILKEAGFNAKMPGGTFYLYVKAPIGTKDGAKFANAEEFSQFMIKEKLISTVPWDDAGNFVRMAACFEAFKDGEISIEEEDRILNEVKRRLTEVEFVFE.

Tyrosine 25 and glycine 52 together coordinate substrate. Residues tyrosine 78, 115–116 (SK), tyrosine 140, asparagine 190, tyrosine 221, and 248–250 (SFS) contribute to the pyridoxal 5'-phosphate site. Substrate is bound by residues lysine 116, tyrosine 140, and asparagine 190. Lysine 251 carries the post-translational modification N6-(pyridoxal phosphate)lysine. Arginine 259 contributes to the pyridoxal 5'-phosphate binding site.

This sequence belongs to the class-I pyridoxal-phosphate-dependent aminotransferase family. In terms of assembly, homodimer. Requires pyridoxal 5'-phosphate as cofactor.

Its subcellular location is the cytoplasm. The catalysed reaction is (2S,6S)-2,6-diaminopimelate + 2-oxoglutarate = (S)-2,3,4,5-tetrahydrodipicolinate + L-glutamate + H2O + H(+). It participates in amino-acid biosynthesis; L-lysine biosynthesis via DAP pathway; LL-2,6-diaminopimelate from (S)-tetrahydrodipicolinate (aminotransferase route): step 1/1. Involved in the synthesis of meso-diaminopimelate (m-DAP or DL-DAP), required for both lysine and peptidoglycan biosynthesis. Catalyzes the direct conversion of tetrahydrodipicolinate to LL-diaminopimelate. The chain is LL-diaminopimelate aminotransferase (dapL) from Methanococcus maripaludis (strain DSM 14266 / JCM 13030 / NBRC 101832 / S2 / LL).